A 72-amino-acid chain; its full sequence is MSKQSSIEQDGKILEALSNAMFRVELSNGHQVIAHISGKMRMNYIKILPGDKVRMEMSPYDLTKGRIVFRYK.

Residues 1–72 (MSKQSSIEQD…TKGRIVFRYK (72 aa)) enclose the S1-like domain.

Belongs to the IF-1 family. As to quaternary structure, component of the 30S ribosomal translation pre-initiation complex which assembles on the 30S ribosome in the order IF-2 and IF-3, IF-1 and N-formylmethionyl-tRNA(fMet); mRNA recruitment can occur at any time during PIC assembly.

It localises to the cytoplasm. One of the essential components for the initiation of protein synthesis. Stabilizes the binding of IF-2 and IF-3 on the 30S subunit to which N-formylmethionyl-tRNA(fMet) subsequently binds. Helps modulate mRNA selection, yielding the 30S pre-initiation complex (PIC). Upon addition of the 50S ribosomal subunit IF-1, IF-2 and IF-3 are released leaving the mature 70S translation initiation complex. The sequence is that of Translation initiation factor IF-1 from Cytophaga hutchinsonii (strain ATCC 33406 / DSM 1761 / CIP 103989 / NBRC 15051 / NCIMB 9469 / D465).